The primary structure comprises 149 residues: Protein FAM72A (149 aa).

It belongs to the FAM72 family. Interacts with UNG. In terms of tissue distribution, expressed at high levels in stomach and also in kidney and, at low levels, in heart (at protein level). In the stomach, highly expressed in foveolar cells, parietal cells and chief cells (at protein level). In kidney, expressed in endothelial cells, mesangial and epithelial cells (parietal and visceral epithelium) around glomerulus (at protein level).

It is found in the cytoplasm. The protein resides in the mitochondrion. May play a role in the regulation of cellular reactive oxygen species metabolism. May participate in cell growth regulation. This is Protein FAM72A (Fam72a) from Rattus norvegicus (Rat).